Reading from the N-terminus, the 88-residue chain is Small integral membrane protein 13 (88 aa).

A helical membrane pass occupies residues 10 to 30; that stretch reads LVFVATLLIVLLLMVCGWYFV. Positions 48–60 are enriched in polar residues; the sequence is TGSQEGDNEQPSG. The segment at 48 to 88 is disordered; sequence TGSQEGDNEQPSGSEAEEDPSASPHKMRSARQRRPPVDDGH. Residues S59, S61, and S70 each carry the phosphoserine modification. Basic residues predominate over residues 72–81; the sequence is HKMRSARQRR.

The protein belongs to the SMIM13 family.

Its subcellular location is the membrane. This Rattus norvegicus (Rat) protein is Small integral membrane protein 13 (Smim13).